Here is a 572-residue protein sequence, read N- to C-terminus: Periplasmic pectate lyase (572 aa).

The first 23 residues, 1-23 (MKKRALLLSMSVLAMLYIPAGQA), serve as a signal peptide directing secretion.

Belongs to the polysaccharide lyase 2 family.

It is found in the periplasm. It carries out the reaction Eliminative cleavage of (1-&gt;4)-alpha-D-galacturonan to give oligosaccharides with 4-deoxy-alpha-D-galact-4-enuronosyl groups at their non-reducing ends.. Its pathway is glycan metabolism; pectin degradation; 2-dehydro-3-deoxy-D-gluconate from pectin: step 2/5. The protein is Periplasmic pectate lyase (pelY) of Yersinia pseudotuberculosis serotype I (strain IP32953).